The following is a 480-amino-acid chain: Adenosylhomocysteinase (480 aa).

Positions 63, 142, and 203 each coordinate substrate. Threonine 204–threonine 206 contributes to the NAD(+) binding site. Substrate is bound by residues lysine 233 and aspartate 237. NAD(+)-binding positions include asparagine 238, glycine 267–glycine 272, glutamate 290, asparagine 325, isoleucine 346–histidine 348, and asparagine 394.

Belongs to the adenosylhomocysteinase family. The cofactor is NAD(+).

It localises to the cytoplasm. The enzyme catalyses S-adenosyl-L-homocysteine + H2O = L-homocysteine + adenosine. Its pathway is amino-acid biosynthesis; L-homocysteine biosynthesis; L-homocysteine from S-adenosyl-L-homocysteine: step 1/1. Functionally, may play a key role in the regulation of the intracellular concentration of adenosylhomocysteine. This Xanthomonas campestris pv. campestris (strain 8004) protein is Adenosylhomocysteinase.